A 192-amino-acid polypeptide reads, in one-letter code: Probable apo-citrate lyase phosphoribosyl-dephospho-CoA transferase (192 aa).

The protein belongs to the CitX family.

The enzyme catalyses apo-[citrate lyase ACP] + 2'-(5''-triphospho-alpha-D-ribosyl)-3'-dephospho-CoA = holo-[citrate lyase ACP] + diphosphate. In terms of biological role, transfers 2-(5''-triphosphoribosyl)-3'-dephosphocoenzyme-A on a serine residue to the apo-acyl carrier protein (gamma chain) of the citrate lyase to yield holo-acyl carrier protein. This is Probable apo-citrate lyase phosphoribosyl-dephospho-CoA transferase from Streptococcus pyogenes serotype M3 (strain ATCC BAA-595 / MGAS315).